The chain runs to 207 residues: Guanylate kinase (207 aa).

Positions 4 to 184 (GILFIISAPS…AVNDLITIIT (181 aa)) constitute a Guanylate kinase-like domain. Residue 11–18 (APSGTGKS) participates in ATP binding.

The protein belongs to the guanylate kinase family.

It is found in the cytoplasm. The catalysed reaction is GMP + ATP = GDP + ADP. Essential for recycling GMP and indirectly, cGMP. The chain is Guanylate kinase (gmk) from Buchnera aphidicola subsp. Acyrthosiphon pisum (strain APS) (Acyrthosiphon pisum symbiotic bacterium).